The chain runs to 70 residues: uncharacterized protein (70 aa).

The N-terminal stretch at Met1–Ala16 is a signal peptide.

This is an uncharacterized protein from Orgyia pseudotsugata (Douglas-fir tussock moth).